Reading from the N-terminus, the 199-residue chain is Ribonuclease HII (199 aa).

The RNase H type-2 domain maps to Gly14–Arg199. A divalent metal cation-binding residues include Asp20, Glu21, and Asp112.

It belongs to the RNase HII family. Mn(2+) is required as a cofactor. Mg(2+) serves as cofactor.

It is found in the cytoplasm. The enzyme catalyses Endonucleolytic cleavage to 5'-phosphomonoester.. Endonuclease that specifically degrades the RNA of RNA-DNA hybrids. The protein is Ribonuclease HII of Polaromonas sp. (strain JS666 / ATCC BAA-500).